The primary structure comprises 721 residues: Mitogen-activated protein kinase 6 (721 aa).

A Protein kinase domain is found at 20 to 316; the sequence is YMDLKPLGCG…AEEALSHPYM (297 aa). ATP-binding positions include 26 to 34 and K49; that span reads LGCGGNGLV. D152 (proton acceptor) is an active-site residue. Phosphothreonine is present on T626. Positions 626-628 match the TXY motif; the sequence is TSY. The residue at position 628 (Y628) is a Phosphotyrosine.

Belongs to the protein kinase superfamily. CMGC Ser/Thr protein kinase family. MAP kinase subfamily. Requires Mg(2+) as cofactor. Dually phosphorylated on Thr-626 and Tyr-628, which activates the enzyme.

The enzyme catalyses L-seryl-[protein] + ATP = O-phospho-L-seryl-[protein] + ADP + H(+). It catalyses the reaction L-threonyl-[protein] + ATP = O-phospho-L-threonyl-[protein] + ADP + H(+). Its activity is regulated as follows. Activated by threonine and tyrosine phosphorylation. Phosphorylates microtubule-associated protein 2 (MAP2). May promote entry in the cell cycle. The chain is Mitogen-activated protein kinase 6 (MAPK6) from Gallus gallus (Chicken).